The following is a 341-amino-acid chain: tRNA N6-adenosine threonylcarbamoyltransferase (341 aa).

2 residues coordinate Fe cation: histidine 114 and histidine 118. Residues 136–140 (LVSGG), aspartate 170, glycine 183, aspartate 187, and asparagine 275 contribute to the substrate site. Fe cation is bound at residue aspartate 303.

Belongs to the KAE1 / TsaD family. Fe(2+) serves as cofactor.

It is found in the cytoplasm. It carries out the reaction L-threonylcarbamoyladenylate + adenosine(37) in tRNA = N(6)-L-threonylcarbamoyladenosine(37) in tRNA + AMP + H(+). In terms of biological role, required for the formation of a threonylcarbamoyl group on adenosine at position 37 (t(6)A37) in tRNAs that read codons beginning with adenine. Is involved in the transfer of the threonylcarbamoyl moiety of threonylcarbamoyl-AMP (TC-AMP) to the N6 group of A37, together with TsaE and TsaB. TsaD likely plays a direct catalytic role in this reaction. The chain is tRNA N6-adenosine threonylcarbamoyltransferase from Mycobacterium avium (strain 104).